Consider the following 233-residue polypeptide: Large ribosomal subunit protein uL1 (233 aa).

The protein belongs to the universal ribosomal protein uL1 family. As to quaternary structure, part of the 50S ribosomal subunit.

Binds directly to 23S rRNA. The L1 stalk is quite mobile in the ribosome, and is involved in E site tRNA release. In terms of biological role, protein L1 is also a translational repressor protein, it controls the translation of the L11 operon by binding to its mRNA. In Psychrobacter cryohalolentis (strain ATCC BAA-1226 / DSM 17306 / VKM B-2378 / K5), this protein is Large ribosomal subunit protein uL1.